The sequence spans 222 residues: 3-demethoxyubiquinol 3-hydroxylase (222 aa).

Glu-71, Glu-101, His-104, Glu-153, Glu-185, and His-188 together coordinate Fe cation.

This sequence belongs to the COQ7 family. Requires Fe cation as cofactor.

The protein localises to the cell membrane. It catalyses the reaction a 5-methoxy-2-methyl-3-(all-trans-polyprenyl)benzene-1,4-diol + AH2 + O2 = a 3-demethylubiquinol + A + H2O. Its pathway is cofactor biosynthesis; ubiquinone biosynthesis. Functionally, catalyzes the hydroxylation of 2-nonaprenyl-3-methyl-6-methoxy-1,4-benzoquinol during ubiquinone biosynthesis. The protein is 3-demethoxyubiquinol 3-hydroxylase of Bordetella pertussis (strain Tohama I / ATCC BAA-589 / NCTC 13251).